The following is a 281-amino-acid chain: Auxin-responsive protein IAA10 (281 aa).

2 disordered regions span residues 1–115 (MRGG…VVGW) and 130–157 (AKEN…EEGE). A compositionally biased stretch (low complexity) spans 7–17 (GPTAGEPPGTE). Acidic residues predominate over residues 18–35 (AEAEEVEESSAGDDEELE). The EAR-like (transcriptional repression) signature appears at 36 to 40 (LGLSL). Composition is skewed to low complexity over residues 36–49 (LGLS…QQQQ) and 63–84 (PAAA…AAAA). The segment covering 133–157 (NTSETDTKKTATNESDVQKDKEEGE) has biased composition (basic and acidic residues). Residues 163-259 (AGWVKVNMDG…KRLRIMRTSD (97 aa)) enclose the PB1 domain.

It belongs to the Aux/IAA family. Homodimers and heterodimers. In terms of tissue distribution, highly expressed in flowers. Expressed in shoots.

The protein localises to the nucleus. Aux/IAA proteins are short-lived transcriptional factors that function as repressors of early auxin response genes at low auxin concentrations. The polypeptide is Auxin-responsive protein IAA10 (IAA10) (Oryza sativa subsp. indica (Rice)).